We begin with the raw amino-acid sequence, 21 residues long: GKPDGAFXDNITVVESVXFXI.

In terms of tissue distribution, hemolymph.

It is found in the secreted. Binds and precipitates antigens of the parasite Echinostoma paraensei. This Biomphalaria glabrata (Bloodfluke planorb) protein is Hemolymph 65 kDa lectin BG04 (BG04).